The chain runs to 561 residues: Nucleoprotein (561 aa).

Positions 53–237 are binding site for the cap structure m7GTP; the sequence is MRKDKRSEAD…ITQEPAQINI (185 aa). Asp-380 and Glu-382 together coordinate Mn(2+). The Zn(2+) site is built by Glu-390, Cys-497, His-500, and Cys-521. Residue Asp-525 participates in Mn(2+) binding.

The protein belongs to the arenaviridae nucleocapsid protein family. In terms of assembly, homomultimerizes to form the nucleocapsid. Binds to viral genomic RNA. Interacts with glycoprotein G2. Interacts with protein Z; this interaction probably directs the encapsidated genome to budding sites. Interacts with protein L; this interaction does not interfere with Z-L interaction. Interacts with host IKBKE (via Protein kinase domain); the interaction inhibits IKBKE kinase activity.

Its subcellular location is the virion. The protein resides in the host cytoplasm. Functionally, encapsidates the genome, protecting it from nucleases. The encapsidated genomic RNA is termed the nucleocapsid (NC). Serves as template for viral transcription and replication. The increased presence of protein N in host cell does not seem to trigger the switch from transcription to replication as observed in other negative strain RNA viruses. Through the interaction with host IKBKE, strongly inhibits the phosphorylation and nuclear translocation of host IRF3, a protein involved in interferon activation pathway, leading to the inhibition of interferon-beta and IRF3-dependent promoters activation. Also encodes a functional 3'-5' exoribonuclease that degrades preferentially dsRNA substrates and thereby participates in the suppression of interferon induction. This is Nucleoprotein from Allpahuayo mammarenavirus (isolate Rat/Peru/CLHP-2472/1997) (ALLV).